The following is an 86-amino-acid chain: Large ribosomal subunit protein bL31 (86 aa).

The tract at residues 65–86 (YRMASSDSSEQKDKSSEEKKES) is disordered. Positions 73–86 (SEQKDKSSEEKKES) are enriched in basic and acidic residues.

It belongs to the bacterial ribosomal protein bL31 family. Type A subfamily. In terms of assembly, part of the 50S ribosomal subunit.

In terms of biological role, binds the 23S rRNA. This is Large ribosomal subunit protein bL31 from Prochlorococcus marinus (strain NATL1A).